The primary structure comprises 284 residues: Probable protein phosphatase 2C 41 (284 aa).

Positions 35 to 282 (SYGFYLVRGM…DDISCVVVRF (248 aa)) constitute a PPM-type phosphatase domain. Mn(2+)-binding residues include Asp72, Gly73, Asp234, and Asp273.

It belongs to the PP2C family. Mg(2+) is required as a cofactor. It depends on Mn(2+) as a cofactor.

It carries out the reaction O-phospho-L-seryl-[protein] + H2O = L-seryl-[protein] + phosphate. The catalysed reaction is O-phospho-L-threonyl-[protein] + H2O = L-threonyl-[protein] + phosphate. In Oryza sativa subsp. japonica (Rice), this protein is Probable protein phosphatase 2C 41.